The following is a 185-amino-acid chain: A-type ATP synthase subunit E (185 aa).

Belongs to the V-ATPase E subunit family. Has multiple subunits with at least A(3), B(3), C, D, E, F, H, I and proteolipid K(x).

Its subcellular location is the cell membrane. Component of the A-type ATP synthase that produces ATP from ADP in the presence of a proton gradient across the membrane. This Thermoplasma acidophilum (strain ATCC 25905 / DSM 1728 / JCM 9062 / NBRC 15155 / AMRC-C165) protein is A-type ATP synthase subunit E.